Here is a 454-residue protein sequence, read N- to C-terminus: Probable glycine dehydrogenase (decarboxylating) subunit 1 (454 aa).

The protein belongs to the GcvP family. N-terminal subunit subfamily. The glycine cleavage system is composed of four proteins: P, T, L and H. In this organism, the P 'protein' is a heterodimer of two subunits.

The enzyme catalyses N(6)-[(R)-lipoyl]-L-lysyl-[glycine-cleavage complex H protein] + glycine + H(+) = N(6)-[(R)-S(8)-aminomethyldihydrolipoyl]-L-lysyl-[glycine-cleavage complex H protein] + CO2. Functionally, the glycine cleavage system catalyzes the degradation of glycine. The P protein binds the alpha-amino group of glycine through its pyridoxal phosphate cofactor; CO(2) is released and the remaining methylamine moiety is then transferred to the lipoamide cofactor of the H protein. This is Probable glycine dehydrogenase (decarboxylating) subunit 1 from Sorangium cellulosum (strain So ce56) (Polyangium cellulosum (strain So ce56)).